Reading from the N-terminus, the 105-residue chain is Replication initiation control protein YabA (105 aa).

Residues His-79, Cys-81, Cys-95, and Cys-98 each coordinate Zn(2+).

The protein belongs to the YabA family. In terms of assembly, homotetramer. Interacts with both DnaA and DnaN, acting as a bridge between these two proteins. Zn(2+) serves as cofactor.

The protein localises to the cytoplasm. Its subcellular location is the nucleoid. Its function is as follows. Involved in control of chromosome replication initiation. Inhibits the cooperative binding of DnaA to the oriC region, thus negatively regulating initiation of chromosome replication. Inhibits the ability of DnaA-ATP to form a helix on DNA; does not disassemble preformed DnaA-DNA helices. Decreases the residence time of DnaA on the chromosome at its binding sites (oriC, replication forks and promoter-binding sites). Tethers DnaA to the replication machinery via the DNA polymerase beta sliding clamp subunit (dnaN). Associates with oriC and other DnaA targets on the chromosome in a DnaA-dependent manner. This Streptococcus sanguinis (strain SK36) protein is Replication initiation control protein YabA.